A 460-amino-acid chain; its full sequence is UDP-N-acetylmuramate--L-alanine ligase (460 aa).

G118 to T124 provides a ligand contact to ATP.

It belongs to the MurCDEF family.

It is found in the cytoplasm. It carries out the reaction UDP-N-acetyl-alpha-D-muramate + L-alanine + ATP = UDP-N-acetyl-alpha-D-muramoyl-L-alanine + ADP + phosphate + H(+). It participates in cell wall biogenesis; peptidoglycan biosynthesis. In terms of biological role, cell wall formation. The chain is UDP-N-acetylmuramate--L-alanine ligase from Clostridium botulinum (strain Alaska E43 / Type E3).